Consider the following 276-residue polypeptide: Large ribosomal subunit protein uL2 (276 aa).

Disordered regions lie at residues 1 to 60 (MSIK…RHKR) and 226 to 276 (NAVD…KRNQ). Basic and acidic residues predominate over residues 20 to 31 (SKEEITREEPEK). Composition is skewed to basic residues over residues 50-60 (STRRQGGRHKR) and 258-276 (KTRRKAKKSDKYIVKKRNQ).

This sequence belongs to the universal ribosomal protein uL2 family. As to quaternary structure, part of the 50S ribosomal subunit. Forms a bridge to the 30S subunit in the 70S ribosome.

In terms of biological role, one of the primary rRNA binding proteins. Required for association of the 30S and 50S subunits to form the 70S ribosome, for tRNA binding and peptide bond formation. It has been suggested to have peptidyltransferase activity; this is somewhat controversial. Makes several contacts with the 16S rRNA in the 70S ribosome. The polypeptide is Large ribosomal subunit protein uL2 (Natranaerobius thermophilus (strain ATCC BAA-1301 / DSM 18059 / JW/NM-WN-LF)).